The chain runs to 246 residues: 3-deoxy-manno-octulosonate cytidylyltransferase (246 aa).

The protein belongs to the KdsB family.

It localises to the cytoplasm. It catalyses the reaction 3-deoxy-alpha-D-manno-oct-2-ulosonate + CTP = CMP-3-deoxy-beta-D-manno-octulosonate + diphosphate. It functions in the pathway nucleotide-sugar biosynthesis; CMP-3-deoxy-D-manno-octulosonate biosynthesis; CMP-3-deoxy-D-manno-octulosonate from 3-deoxy-D-manno-octulosonate and CTP: step 1/1. The protein operates within bacterial outer membrane biogenesis; lipopolysaccharide biosynthesis. Activates KDO (a required 8-carbon sugar) for incorporation into bacterial lipopolysaccharide in Gram-negative bacteria. This is 3-deoxy-manno-octulosonate cytidylyltransferase from Rickettsia massiliae (strain Mtu5).